A 24-amino-acid chain; its full sequence is Major pollen allergen Ole e 4 (24 aa).

Belongs to the glycosyl hydrolase 17 family. Post-translationally, the N-terminus is blocked.

The sequence is that of Major pollen allergen Ole e 4 from Olea europaea (Common olive).